The primary structure comprises 35 residues: uncharacterized protein (35 aa).

The span at 1–27 shows a compositional bias: low complexity; sequence MDQNEANIYNENNENNENNENENCQNE. A disordered region spans residues 1–35; the sequence is MDQNEANIYNENNENNENNENENCQNEPIRIKIII.

This is an uncharacterized protein from Dictyostelium discoideum (Social amoeba).